Reading from the N-terminus, the 414-residue chain is Probable protein phosphatase 2C 80 (414 aa).

One can recognise a PPM-type phosphatase domain in the interval 174–411 (SCYLPHPEKE…DDITAVVSYV (238 aa)). Asp-204, Gly-205, Asp-336, and Asp-402 together coordinate Mn(2+).

Belongs to the PP2C family. Mg(2+) is required as a cofactor. The cofactor is Mn(2+).

The catalysed reaction is O-phospho-L-seryl-[protein] + H2O = L-seryl-[protein] + phosphate. The enzyme catalyses O-phospho-L-threonyl-[protein] + H2O = L-threonyl-[protein] + phosphate. In Arabidopsis thaliana (Mouse-ear cress), this protein is Probable protein phosphatase 2C 80.